Consider the following 977-residue polypeptide: Disks large-associated protein 1 (977 aa).

2 disordered regions span residues 150–203 (TKSH…GWWS) and 349–371 (KAMGDEDSGDSDTSPKPSPKVAA). Phosphoserine occurs at positions 169, 356, 359, 362, 366, 383, 412, 415, 419, 422, 431, 503, 510, and 562. Thr563 is subject to Phosphothreonine. Phosphoserine occurs at positions 565 and 589. Thr590 carries the post-translational modification Phosphothreonine. Phosphoserine is present on residues Ser592 and Ser595. Interaction with DYL2 regions lie at residues 650–661 (LSIGIQVDDAEE) and 672–683 (SKFQSVGVQVEE). Positions 899–965 (WKQMDPLDKK…QNSATESAES (67 aa)) are disordered. Basic and acidic residues-rich tracts occupy residues 903-912 (DPLDKKERRA) and 928-943 (IRERSLESSQRQEARK). Phosphoserine is present on Ser932. Residues 954-963 (VRQNSATESA) are compositionally biased toward polar residues. Residues 975-977 (TRL) carry the PDZ-binding motif.

The protein belongs to the SAPAP family. In terms of assembly, interacts with guanylate kinase-like domain of DLG1, DLG2, DLG3, DLG4 and AIP1. Interacts with the PDZ domain of SHANK1, SHANK2 and SHANK3. Found in a complex with DLG4 and SHANK1, SHANK2 or SHANK3. Found in a complex with DLG4 and BEGAIN. Interacts with DYL2 and LRFN1. Interacts with MPP2 (via the SH3-Guanylate kinase-like sub-module). Post-translationally, ubiquitinated by TRIM3; leading to proteasomal degradation. As to expression, expressed in brain.

Its subcellular location is the cell membrane. The protein resides in the postsynaptic density. It is found in the synapse. Functionally, part of the postsynaptic scaffold in neuronal cells. In Homo sapiens (Human), this protein is Disks large-associated protein 1 (DLGAP1).